We begin with the raw amino-acid sequence, 505 residues long: Deoxyguanosinetriphosphate triphosphohydrolase (505 aa).

The region spanning 66 to 273 (RLTHSMEVQQ…MEAADDISYC (208 aa)) is the HD domain.

Belongs to the dGTPase family. Type 1 subfamily. In terms of assembly, homotetramer. Requires Mg(2+) as cofactor.

It catalyses the reaction dGTP + H2O = 2'-deoxyguanosine + triphosphate + H(+). In terms of biological role, dGTPase preferentially hydrolyzes dGTP over the other canonical NTPs. The sequence is that of Deoxyguanosinetriphosphate triphosphohydrolase from Escherichia fergusonii (strain ATCC 35469 / DSM 13698 / CCUG 18766 / IAM 14443 / JCM 21226 / LMG 7866 / NBRC 102419 / NCTC 12128 / CDC 0568-73).